A 436-amino-acid chain; its full sequence is MFKAQATFSRYSAAVSLLLLFSGAAQAAPQSITTLPLQPDGENRWRLPAGEYQGQFTIEQPMQLRCEPGAVIQSQGQGSSLLISAPDVLVEGCTLYEWGSDLTAMDSAVFILPAAERAQISNNRMRGPGFGVFVDGTRDVQVIGNEIDGDAGVRSQDRGNGIHLFAVSGARVLHNHVRNARDGIYIDTSNGNHLEGNVIEDVRYGVHYMFANENSLIDNVTRRTRTGYALMQSRKLTVTGNRSEQDQNYGILMNYITYSTITGNFVSDVQRGDTGGDSMISGGEGKALFIYNSLFNTIENNHFEKSSLGIHLTAGSEDNRISGNAFVGNQQQVKYVASRTQEWSVDGRGNYWSDYLGWDRNNDGLGDIAYEPNDNVDRLLWLYPQVRLLMNSPSIEVLRWVQRAFPVIKSPGVQDSHPLMKLPTEKLLTEKQEPTS.

The signal sequence occupies residues 1 to 27 (MFKAQATFSRYSAAVSLLLLFSGAAQA). 8 PbH1 repeats span residues 85–113 (APDV…FILP), 115–136 (AERA…FVDG), 137–166 (TRDV…HLFA), 167–188 (VSGA…YIDT), 189–210 (SNGN…HYMF), 233–255 (SRKL…LMNY), 293–314 (SLFN…HLTA), and 316–354 (SEDN…YWSD).

It belongs to the NosD family. As to quaternary structure, the complex may be composed of an ATP-binding protein (NosF), a transmembrane protein (NosY) and a solute-binding protein (NosD).

The protein localises to the periplasm. Functionally, required for the assembly of the copper chromophores of nitrous oxide reductase. Could be part of the ABC transporter complex NosDFY. The sequence is that of Probable ABC transporter binding protein NosD from Stutzerimonas stutzeri (Pseudomonas stutzeri).